The following is a 321-amino-acid chain: Pectinesterase (321 aa).

Residue Thr-1 is modified to N-acetylthreonine. An N-linked (GlcNAc...) (complex) asparagine glycan is attached at Asn-75. Substrate is bound by residues Thr-84 and Gln-114. The active-site Proton donor is the Asp-137. A disulfide bond links Cys-151 and Cys-171. Asp-158 (nucleophile) is an active-site residue. Substrate contacts are provided by Arg-226 and Trp-228. 3 N-linked (GlcNAc...) (complex) asparagine glycosylation sites follow: Asn-275, Asn-290, and Asn-319.

The protein belongs to the pectinesterase family. The N-glycans attached at Asn-75, Asn-275, Asn-290 and Asn-319 are complex oligosaccharides containing xylose, fucose, hexose and N-acetylglucosamine.

The enzyme catalyses [(1-&gt;4)-alpha-D-galacturonosyl methyl ester](n) + n H2O = [(1-&gt;4)-alpha-D-galacturonosyl](n) + n methanol + n H(+). It functions in the pathway glycan metabolism; pectin degradation; 2-dehydro-3-deoxy-D-gluconate from pectin: step 1/5. Its activity is regulated as follows. Inhibited by PMEI. This chain is Pectinesterase, found in Actinidia deliciosa (Kiwi).